Reading from the N-terminus, the 224-residue chain is Orotidine 5'-phosphate decarboxylase (224 aa).

Substrate is bound by residues D10, K32, 59 to 68 (DLKLHDIPNT), T115, R175, Q184, G204, and R205. K61 functions as the Proton donor in the catalytic mechanism.

This sequence belongs to the OMP decarboxylase family. Type 1 subfamily. As to quaternary structure, homodimer.

The enzyme catalyses orotidine 5'-phosphate + H(+) = UMP + CO2. The protein operates within pyrimidine metabolism; UMP biosynthesis via de novo pathway; UMP from orotate: step 2/2. In terms of biological role, catalyzes the decarboxylation of orotidine 5'-monophosphate (OMP) to uridine 5'-monophosphate (UMP). The sequence is that of Orotidine 5'-phosphate decarboxylase from Erythrobacter litoralis (strain HTCC2594).